A 118-amino-acid polypeptide reads, in one-letter code: Small ribosomal subunit protein eS24 (118 aa).

The protein belongs to the eukaryotic ribosomal protein eS24 family.

The sequence is that of Small ribosomal subunit protein eS24 from Sulfolobus acidocaldarius (strain ATCC 33909 / DSM 639 / JCM 8929 / NBRC 15157 / NCIMB 11770).